The following is a 90-amino-acid chain: Probable Fe(2+)-trafficking protein (90 aa).

The protein belongs to the Fe(2+)-trafficking protein family. Monomer.

Could be a mediator in iron transactions between iron acquisition and iron-requiring processes, such as synthesis and/or repair of Fe-S clusters in biosynthetic enzymes. The chain is Probable Fe(2+)-trafficking protein from Enterobacter sp. (strain 638).